Reading from the N-terminus, the 258-residue chain is HVA22-like protein j (258 aa).

Residues 153–258 are disordered; the sequence is AANQPPTERN…RSNSRTQPAA (106 aa). Over residues 156 to 169 the composition is skewed to polar residues; it reads QPPTERNVNMNAQS. Over residues 206–215 the composition is skewed to pro residues; that stretch reads WPPPTPPPTP.

It belongs to the DP1 family.

The sequence is that of HVA22-like protein j (HVA22J) from Arabidopsis thaliana (Mouse-ear cress).